Here is a 235-residue protein sequence, read N- to C-terminus: RAD9, HUS1, RAD1-interacting nuclear orphan protein 1 (235 aa).

Position 50 is a phosphoserine (Ser-50). Residues 54–60 (SWVLPQF) carry the RAD1-binding motif motif. The tract at residues 66–106 (SRFPTHRKHHRDQARHPTRRSTCKFPRLTFESPESSSSETL) is disordered. Over residues 69-87 (PTHRKHHRDQARHPTRRST) the composition is skewed to basic residues. Positions 96–106 (ESPESSSSETL) are enriched in low complexity. The D-box signature appears at 123 to 130 (RRPLVPLF). The interval 156-198 (QTPGSSVREDPISPDQKENSLPSCILGPRTPRTPEPGPVLVKD) is disordered. Residues 162–173 (VREDPISPDQKE) show a composition bias toward basic and acidic residues. A KEN box motif is present at residues 171 to 175 (QKENS).

In terms of assembly, interacts (when phosphorylated by PLK1) with POLQ; promoting POLQ recruitment to DNA damage sites. Interacts with RAD1; interaction is direct and promotes association with the 9-1-1 (RAD9-RAD1-HUS1) complex. Interacts with RAD18. Interacts with TOPBP1. Interacts with UBE2N. Post-translationally, phosphorylated at Ser-50 by PLK1, promoting interaction with polymerase theta (POLQ). In terms of processing, ubiquitinated and degraded by the APC/C complex upon mitotic exit.

The protein resides in the nucleus. The protein localises to the chromosome. In terms of biological role, involved in microhomology-mediated end-joining (MMEJ) DNA repair by promoting recruitment of polymerase theta (POLQ) to DNA damage sites during mitosis. MMEJ is an alternative non-homologous end-joining (NHEJ) machinery that takes place during mitosis to repair double-strand breaks in DNA that originate in S-phase. Accumulates in M-phase; following phosphorylation by PLK1, interacts with POLQ, enabling its recruitment to double-strand breaks for subsequent repair. Also involved in the DNA damage response (DDR) signaling in response to genotoxic stresses such as ionizing radiation (IR) during the S phase. Recruited to sites of DNA damage through interaction with the 9-1-1 cell-cycle checkpoint response complex and TOPBP1 in a ATR-dependent manner. Required for the progression of the G1 to S phase transition. Plays a role in the stimulation of CHEK1 phosphorylation. The chain is RAD9, HUS1, RAD1-interacting nuclear orphan protein 1 (Rhno1) from Rattus norvegicus (Rat).